Reading from the N-terminus, the 185-residue chain is Large ribosomal subunit protein uL5 (185 aa).

This sequence belongs to the universal ribosomal protein uL5 family. Part of the 50S ribosomal subunit; part of the 5S rRNA/L5/L18/L25 subcomplex. Contacts the 5S rRNA and the P site tRNA. Forms a bridge to the 30S subunit in the 70S ribosome.

In terms of biological role, this is one of the proteins that bind and probably mediate the attachment of the 5S RNA into the large ribosomal subunit, where it forms part of the central protuberance. In the 70S ribosome it contacts protein S13 of the 30S subunit (bridge B1b), connecting the 2 subunits; this bridge is implicated in subunit movement. Contacts the P site tRNA; the 5S rRNA and some of its associated proteins might help stabilize positioning of ribosome-bound tRNAs. The chain is Large ribosomal subunit protein uL5 from Treponema pallidum (strain Nichols).